The chain runs to 190 residues: Large ribosomal subunit protein bL17 (190 aa).

The segment at 128 to 190 (KKTAGRKAAQ…VEENNEQNKA (63 aa)) is disordered. Residues 143–154 (ALAPAEETPAPT) are compositionally biased toward low complexity. Residues 179–190 (LAVEENNEQNKA) are compositionally biased toward acidic residues.

This sequence belongs to the bacterial ribosomal protein bL17 family. In terms of assembly, part of the 50S ribosomal subunit. Contacts protein L32.

This is Large ribosomal subunit protein bL17 from Salinispora tropica (strain ATCC BAA-916 / DSM 44818 / JCM 13857 / NBRC 105044 / CNB-440).